The following is a 941-amino-acid chain: Probable lipoxygenase 8, chloroplastic (941 aa).

2 disordered regions span residues 1-22 (MLRP…SSSS) and 45-68 (LIAG…VVRC). The N-terminal 67 residues, 1–67 (MLRPQLNPSS…QQGRQRVVVR (67 aa)), are a transit peptide targeting the chloroplast. Residues 100–236 (AVATIKVTVE…SIDEGTPGKR (137 aa)) enclose the PLAT domain. In terms of domain architecture, Lipoxygenase spans 242-941 (AYLPGQTPAG…GMGIPNSTSI (700 aa)). Disordered regions lie at residues 255-274 (YREE…READ) and 288-331 (NPDS…RKGN). The segment covering 319–331 (SKKDPKSETRKGN) has biased composition (basic and acidic residues). Residues His598, His603, His790, Asn794, and Ile941 each coordinate Fe cation.

Belongs to the lipoxygenase family. Requires Fe cation as cofactor.

It localises to the plastid. The protein resides in the chloroplast. It carries out the reaction (9Z,12Z)-octadecadienoate + O2 = (13S)-hydroperoxy-(9Z,11E)-octadecadienoate. The catalysed reaction is (9Z,12Z,15Z)-octadecatrienoate + O2 = (13S)-hydroperoxy-(9Z,11E,15Z)-octadecatrienoate. It functions in the pathway lipid metabolism; oxylipin biosynthesis. Plant lipoxygenase may be involved in a number of diverse aspects of plant physiology including growth and development, pest resistance, and senescence or responses to wounding. It catalyzes the hydroperoxidation of lipids containing a cis,cis-1,4-pentadiene structure. This chain is Probable lipoxygenase 8, chloroplastic (CM-LOX2), found in Oryza sativa subsp. japonica (Rice).